Consider the following 482-residue polypeptide: MTTITTAAIIGAGLAGCECALRLARAGVRVTLFEMKPAAFSPAHSNPDLGELVCSNSLRSDDIASGVGLLKQEMRELGSIVMEAADATRVPAGKALAVDRDLFARHITAVIEAEPGITLERREVASLDDPALASADVVVVAAGPLASAGLSDSLAAMVGGQLYFYDAIAPIIAAESIDLSIAFSGSRYGEPGEEGDYLNCPMNRDEYDAFYEALLAAEKVPSRDFEKELHFEGCMPIEALAERGPRTLVFGPFKPVGFTDPRTGTRPYAIIQLRAENRNKTAFNIVGCQTKLKYAEQERVFRMIPGLAGAEFVRHGSVHRNTYVNAPRVLADDLSLRADKRVFLAGQITGVEGYVESAACGMWLGMVLAARIQGRELPTPPPQTALGALLMHLRTPVKNFQPSNANFGLMPELGLKVKKRERKPLYSARAREHFVRWLAEAGVTPVIEPLLPTAPDAADATGAIDTTGATGAAREETAPTEA.

Glycine 11–glycine 16 provides a ligand contact to FAD.

The protein belongs to the MnmG family. TrmFO subfamily. FAD is required as a cofactor.

It localises to the cytoplasm. The enzyme catalyses uridine(54) in tRNA + (6R)-5,10-methylene-5,6,7,8-tetrahydrofolate + NADH + H(+) = 5-methyluridine(54) in tRNA + (6S)-5,6,7,8-tetrahydrofolate + NAD(+). The catalysed reaction is uridine(54) in tRNA + (6R)-5,10-methylene-5,6,7,8-tetrahydrofolate + NADPH + H(+) = 5-methyluridine(54) in tRNA + (6S)-5,6,7,8-tetrahydrofolate + NADP(+). Catalyzes the folate-dependent formation of 5-methyl-uridine at position 54 (M-5-U54) in all tRNAs. The polypeptide is Methylenetetrahydrofolate--tRNA-(uracil-5-)-methyltransferase TrmFO (Nitratidesulfovibrio vulgaris (strain DP4) (Desulfovibrio vulgaris)).